Here is a 2335-residue protein sequence, read N- to C-terminus: Serine/threonine-protein kinase tor1 (2335 aa).

HEAT repeat units lie at residues 1–31, 164–201, 331–371, 410–449, 474–512, 522–560, 562–596, 642–679, 684–722, 728–766, 843–880, 904–923, 924–961, 964–1003, and 1005–1042; these read MEYF…SSTK, LYIS…VVCQ, PYLQ…AVKL, PIQE…AREP, YSLI…RDPI, ESVA…RHLA, PDNI…YNPA, PYIQ…VEGE, DVRG…RSGY, LDYP…LDPY, VFLP…IIGP, LLVI…DEFK, FYLP…FGSN, EYMH…SVNF, and DHAS…QLGY. The 556-residue stretch at 1226–1781 folds into the FAT domain; it reads VISAHASKCN…VYSLTVSSKS (556 aa). In terms of domain architecture, PI3K/PI4K catalytic spans 1955–2269; sequence FHHTFEVISS…ARHADYAALS (315 aa). The segment at 1961 to 1967 is G-loop; the sequence is VISSKQR. Thr-1972 is subject to Phosphothreonine; by PKB/AKT1. Residues 2134–2142 form a catalytic loop region; sequence GLGDRHPSN. Residues 2154–2179 form an activation loop region; it reads HIDFGDCFEVAMHREKFPEKIPFRLT. The 33-residue stretch at 2303-2335 folds into the FATC domain; that stretch reads EQLPVKAQVEKLIQQATAPENLCRCYVGWCSFW.

The protein belongs to the PI3/PI4-kinase family. The target of rapamycin complex 2 (TORC2) is composed of at least bit61, pop3/wat1, sin1, ste20 and tor1. In terms of processing, phosphorylation at Thr-1972 in the ATP-binding region by AKT1 strongly reduces kinase activity.

It localises to the cytoplasm. The enzyme catalyses L-seryl-[protein] + ATP = O-phospho-L-seryl-[protein] + ADP + H(+). It catalyses the reaction L-threonyl-[protein] + ATP = O-phospho-L-threonyl-[protein] + ADP + H(+). In terms of biological role, catalytic component of TORC2, which regulates multiple cellular processes to control cell growth in response to environmental signals. In response to signals, TORC2 phosphorylates AGC protein kinase family members. TORC2 is required for cell survival under various stress conditions. TORC2 positively controls G1 cell-cycle arrest, sexual development and amino acid uptake. Positively regulates amino acid uptake through the control of expression of amino acid permeases. Responsible for the phosphorylation of AGC kinase gad8 at 'Ser-527' and 'Ser-546', activating gad8 kinase activity and promoting sexual development. The polypeptide is Serine/threonine-protein kinase tor1 (Schizosaccharomyces pombe (strain 972 / ATCC 24843) (Fission yeast)).